The following is a 198-amino-acid chain: Chromophore lyase CpcS/CpeS 2 (198 aa).

It belongs to the CpcS/CpeS biliprotein lyase family.

The protein resides in the plastid. Its subcellular location is the organellar chromatophore. Functionally, covalently attaches a chromophore to Cys residue(s) of phycobiliproteins. In Paulinella chromatophora, this protein is Chromophore lyase CpcS/CpeS 2.